The sequence spans 291 residues: NAD kinase (291 aa).

The active-site Proton acceptor is the Asp73. NAD(+)-binding positions include 73–74 (DG), 147–148 (ND), Arg175, Asp177, 188–193 (TAYALS), Ala212, and Gln246.

Belongs to the NAD kinase family. A divalent metal cation serves as cofactor.

It localises to the cytoplasm. The catalysed reaction is NAD(+) + ATP = ADP + NADP(+) + H(+). Its function is as follows. Involved in the regulation of the intracellular balance of NAD and NADP, and is a key enzyme in the biosynthesis of NADP. Catalyzes specifically the phosphorylation on 2'-hydroxyl of the adenosine moiety of NAD to yield NADP. The chain is NAD kinase from Polaromonas naphthalenivorans (strain CJ2).